A 126-amino-acid chain; its full sequence is UPF0538 protein C2orf76 homolog (126 aa).

This sequence belongs to the UPF0538 family.

The chain is UPF0538 protein C2orf76 homolog from Bos taurus (Bovine).